Reading from the N-terminus, the 199-residue chain is dITP/XTP pyrophosphatase (199 aa).

9 to 14 (TGNKGK) provides a ligand contact to substrate. 2 residues coordinate Mg(2+): E41 and D70. D70 (proton acceptor) is an active-site residue. Residues S71, 157 to 160 (FGYD), K180, and 185 to 186 (HR) each bind substrate.

The protein belongs to the HAM1 NTPase family. As to quaternary structure, homodimer. The cofactor is Mg(2+).

It catalyses the reaction XTP + H2O = XMP + diphosphate + H(+). It carries out the reaction dITP + H2O = dIMP + diphosphate + H(+). The enzyme catalyses ITP + H2O = IMP + diphosphate + H(+). Pyrophosphatase that catalyzes the hydrolysis of nucleoside triphosphates to their monophosphate derivatives, with a high preference for the non-canonical purine nucleotides XTP (xanthosine triphosphate), dITP (deoxyinosine triphosphate) and ITP. Seems to function as a house-cleaning enzyme that removes non-canonical purine nucleotides from the nucleotide pool, thus preventing their incorporation into DNA/RNA and avoiding chromosomal lesions. The protein is dITP/XTP pyrophosphatase of Mannheimia succiniciproducens (strain KCTC 0769BP / MBEL55E).